We begin with the raw amino-acid sequence, 367 residues long: Homoserine O-acetyltransferase (367 aa).

The 307-residue stretch at 44-350 folds into the AB hydrolase-1 domain; sequence NAIMVTHAWT…AYGHDAFLLE (307 aa). The Nucleophile role is filled by serine 150. Substrate is bound at residue arginine 217. Catalysis depends on residues aspartate 311 and histidine 344. A substrate-binding site is contributed by aspartate 345.

It belongs to the AB hydrolase superfamily. MetX family. In terms of assembly, homodimer.

It localises to the cytoplasm. The catalysed reaction is L-homoserine + acetyl-CoA = O-acetyl-L-homoserine + CoA. Its pathway is amino-acid biosynthesis; L-methionine biosynthesis via de novo pathway; O-acetyl-L-homoserine from L-homoserine: step 1/1. Its function is as follows. Transfers an acetyl group from acetyl-CoA to L-homoserine, forming acetyl-L-homoserine. This is Homoserine O-acetyltransferase from Geotalea daltonii (strain DSM 22248 / JCM 15807 / FRC-32) (Geobacter daltonii).